A 59-amino-acid polypeptide reads, in one-letter code: Gonadotropin-releasing hormone receptor (59 aa).

Topologically, residues 1-2 (VA) are cytoplasmic. A helical transmembrane segment spans residues 3-23 (FATSFTVCWTPYYVLGIWYWF). At 24–37 (DPEMLNRVSDPVNH) the chain is on the extracellular side. The chain crosses the membrane as a helical span at residues 38 to 58 (FFFLFAFLNPCFDPLIYGYFS). Position 59 (Leu-59) is a topological domain, cytoplasmic.

It belongs to the G-protein coupled receptor 1 family.

It is found in the cell membrane. Functionally, receptor for gonadotropin releasing hormone (GnRH) that mediates the action of GnRH to stimulate the secretion of the gonadotropic hormones luteinizing hormone (LH) and follicle-stimulating hormone (FSH). This receptor mediates its action by association with G-proteins that activate a phosphatidylinositol-calcium second messenger system. The chain is Gonadotropin-releasing hormone receptor (GNRHR) from Macaca mulatta (Rhesus macaque).